The sequence spans 261 residues: Small ribosomal subunit protein eS1 (261 aa).

Over residues 1-18 (MAVGKNKRISKGKKGGKK) the composition is skewed to basic residues. Positions 1–20 (MAVGKNKRISKGKKGGKKKA) are disordered.

The protein belongs to the eukaryotic ribosomal protein eS1 family. In terms of assembly, component of the small ribosomal subunit. Mature ribosomes consist of a small (40S) and a large (60S) subunit. The 40S subunit contains about 33 different proteins and 1 molecule of RNA (18S). The 60S subunit contains about 49 different proteins and 3 molecules of RNA (25S, 5.8S and 5S).

Its subcellular location is the cytoplasm. This Catharanthus roseus (Madagascar periwinkle) protein is Small ribosomal subunit protein eS1.